The chain runs to 305 residues: Ferrochelatase (305 aa).

The Fe cation site is built by H182 and E262.

It belongs to the ferrochelatase family.

The protein localises to the cytoplasm. It catalyses the reaction heme b + 2 H(+) = protoporphyrin IX + Fe(2+). It participates in porphyrin-containing compound metabolism; protoheme biosynthesis; protoheme from protoporphyrin-IX: step 1/1. Its function is as follows. Catalyzes the ferrous insertion into protoporphyrin IX. The chain is Ferrochelatase from Herpetosiphon aurantiacus (strain ATCC 23779 / DSM 785 / 114-95).